Reading from the N-terminus, the 231-residue chain is 4-hydroxy-tetrahydrodipicolinate reductase (231 aa).

NAD(+) is bound by residues Asp33, 68-70, and 92-95; these read CTT and SSNT. His124 serves as the catalytic Proton donor/acceptor. His125 provides a ligand contact to (S)-2,3,4,5-tetrahydrodipicolinate. Lys128 (proton donor) is an active-site residue. Residue 134–135 participates in (S)-2,3,4,5-tetrahydrodipicolinate binding; sequence GT.

Belongs to the DapB family.

The protein localises to the cytoplasm. The enzyme catalyses (S)-2,3,4,5-tetrahydrodipicolinate + NAD(+) + H2O = (2S,4S)-4-hydroxy-2,3,4,5-tetrahydrodipicolinate + NADH + H(+). It catalyses the reaction (S)-2,3,4,5-tetrahydrodipicolinate + NADP(+) + H2O = (2S,4S)-4-hydroxy-2,3,4,5-tetrahydrodipicolinate + NADPH + H(+). It functions in the pathway amino-acid biosynthesis; L-lysine biosynthesis via DAP pathway; (S)-tetrahydrodipicolinate from L-aspartate: step 4/4. Functionally, catalyzes the conversion of 4-hydroxy-tetrahydrodipicolinate (HTPA) to tetrahydrodipicolinate. In Brachyspira hyodysenteriae (strain ATCC 49526 / WA1), this protein is 4-hydroxy-tetrahydrodipicolinate reductase.